Reading from the N-terminus, the 439-residue chain is MPPPSSHSNIFHSTFKHTVKETMANAKKTMIAKILSSRNKWAICDRTLYPIYYLLLILGLNQSIRPNNSLLFRIYSWLVFCLLLFTTLRKFNQVGVRPNGTRENLQEFFANPRSMITLCNALIMLSGLLASLQLYTLGAKRLKPLKILCQFSLNVRTKQAERRQFMINTFLAVFSGLLALTMAATYAMSKWGYILYIVGTPNLDTETIFCVLLDSYALFVSRAAISALAILFYQHCSVIRRSIKHLINEMVPAEQDECPLPESSLQKIHDCQISYQRIFNGKAVIEEYYSFVLFYSYGVCIPIFCFLMFVGMSAQSICWSEVVSIVIWIVNAILVLLLFSLPAFMINEDGDRLVASSFRMYHETFHEERDLTVLSQMTFFTFQIHSTKLTLSACNYFYMDRSILLSLFSAILTYFLILWEFDIKNNQSLQNIANHTIHT.

Topologically, residues 1–67 (MPPPSSHSNI…LGLNQSIRPN (67 aa)) are cytoplasmic. The chain crosses the membrane as a helical span at residues 68 to 88 (NSLLFRIYSWLVFCLLLFTTL). Residues 89–114 (RKFNQVGVRPNGTRENLQEFFANPRS) lie on the Extracellular side of the membrane. Residues 115 to 135 (MITLCNALIMLSGLLASLQLY) traverse the membrane as a helical segment. Topologically, residues 136–164 (TLGAKRLKPLKILCQFSLNVRTKQAERRQ) are cytoplasmic. The helical transmembrane segment at 165–185 (FMINTFLAVFSGLLALTMAAT) threads the bilayer. Topologically, residues 186–211 (YAMSKWGYILYIVGTPNLDTETIFCV) are extracellular. A helical membrane pass occupies residues 212–232 (LLDSYALFVSRAAISALAILF). Residues 233 to 290 (YQHCSVIRRSIKHLINEMVPAEQDECPLPESSLQKIHDCQISYQRIFNGKAVIEEYYS) lie on the Cytoplasmic side of the membrane. Residues 291-311 (FVLFYSYGVCIPIFCFLMFVG) traverse the membrane as a helical segment. Topologically, residues 312–324 (MSAQSICWSEVVS) are extracellular. A helical transmembrane segment spans residues 325 to 345 (IVIWIVNAILVLLLFSLPAFM). At 346–402 (INEDGDRLVASSFRMYHETFHEERDLTVLSQMTFFTFQIHSTKLTLSACNYFYMDRS) the chain is on the cytoplasmic side. The chain crosses the membrane as a helical span at residues 403-423 (ILLSLFSAILTYFLILWEFDI). The Extracellular portion of the chain corresponds to 424–439 (KNNQSLQNIANHTIHT).

The protein belongs to the insect chemoreceptor superfamily. Gustatory receptor (GR) family. Expressed in the AVG and PVT neurons of the tail.

It is found in the cell membrane. In terms of biological role, photoreceptor for short wavelength (UV) light that mediates UV-light-induced avoidance behavior. Directly senses and absorbs both UV-A and UV-B light with very high efficiency. Absorption of UV-B but not UV-A light shows resistance to photobleaching. In contrast to other photoreceptors, does not use a prosthetic chromophore to capture photons and only depends on its protein conformation. Might have a role in response to white light exposure. This is High-energy light unresponsive protein 1 from Caenorhabditis elegans.